We begin with the raw amino-acid sequence, 79 residues long: Succinate dehydrogenase assembly factor 1, mitochondrial (79 aa).

It belongs to the complex I LYR family. SDHAF1 subfamily. As to quaternary structure, interacts with sdh2 within an sdh1-sdh2 subcomplex.

It is found in the mitochondrion matrix. In terms of biological role, plays an essential role in the assembly of succinate dehydrogenase (SDH), an enzyme complex (also referred to as respiratory complex II) that is a component of both the tricarboxylic acid (TCA) cycle and the mitochondrial electron transport chain, and which couples the oxidation of succinate to fumarate with the reduction of ubiquinone (coenzyme Q) to ubiquinol. Promotes maturation of the iron-sulfur protein subunit sdh2 of the SDH catalytic dimer, protecting it from the deleterious effects of oxidants. May act together with SDHAF3. The protein is Succinate dehydrogenase assembly factor 1, mitochondrial of Schizosaccharomyces pombe (strain 972 / ATCC 24843) (Fission yeast).